Here is a 286-residue protein sequence, read N- to C-terminus: Replication protein RepA (286 aa).

Belongs to the initiator RepB protein family.

Its function is as follows. RepA is essential for origin function, autoregulates its own synthesis from the promoter, and, when overproduced, blocks origin function. The chain is Replication protein RepA (repA) from Escherichia coli.